Consider the following 248-residue polypeptide: uncharacterized protein (248 aa).

The next 6 helical transmembrane spans lie at 65–85 (IIIYGVILQIYTTILFKQFLT), 105–125 (SITSFFYNGFCHVAVMIILWY), 126–146 (ISWTLIDYGTLVIAIMILGFI), 156–176 (LCCFIAIFTSIVHSTFFTLLI), 188–208 (LILNLTFLTITYILMILSDYS), and 222–242 (VIYIYCIQIIILQFIFIYKYT).

It is found in the cell membrane. This is an uncharacterized protein from Rickettsia prowazekii (strain Madrid E).